Reading from the N-terminus, the 785-residue chain is SUN domain-containing protein 1 (785 aa).

An LMNA-binding region spans residues 1–138; sequence MDFSRLHMYS…TRRPPVLDES (138 aa). The Nuclear segment spans residues 1–288; the sequence is MDFSRLHMYS…VFLLTRCLRN (288 aa). 3 positions are modified to phosphoserine: S48, S100, and S138. A Glycyl lysine isopeptide (Lys-Gly) (interchain with G-Cter in SUMO2) cross-link involves residue K195. An SYNE2-binding region spans residues 209-309; that stretch reads SRVYSRDRNQ…FLLLAGLSLR (101 aa). The interval 223-309 is EMD-binding; the sequence is LLQILRRIGA…FLLLAGLSLR (87 aa). A helical transmembrane segment spans residues 289–308; sequence ICKFLVLLIPLFLLLAGLSL. At 309 to 785 the chain is on the perinuclear space side; sequence RGQGNFFSFL…RFRVHGEPVK (477 aa). D333 and S344 each carry phosphoserine. Positions 428 to 495 form a coiled coil; that stretch reads HQEHEVRMSH…KSELSSWRHV (68 aa). Residues 574–785 form a sufficient for interaction with SYNE1 and SYNE2 region; the sequence is TSEAVVSAVS…RFRVHGEPVK (212 aa). Positions 622–784 constitute an SUN domain; sequence GGSILSTRCS…YRFRVHGEPV (163 aa).

Core component of the LINC complex which is composed of inner nuclear membrane SUN domain-containing proteins coupled to outer nuclear membrane KASH domain-containing nesprins. SUN and KASH domain-containing proteins seem to bind each other promiscuously; however, differentially expression of LINC complex constituents is giving rise to specific assemblies. At least SUN1/2-containing core LINC complexes are proposed to be hexameric composed of three protomers of each KASH and SUN domain-containing protein. Interacts with KASH5 (via the last 22 amino acids); this interaction mediates KASH5 telomere localization by forming a SUN1:KASH5 LINC complex. May interact with SYNE3. Interacts with SYNE2 and SYNE1; probably forming respective LINC complexes. Interacts with A-type lamin with a strong preference for unprocessed A-type lamin compared with the mature protein. Interaction with lamins B1 and C is hardly detectable. Interacts with NAT10. Interacts with EMD and TSNAX. Associates with the nuclear pore complex (NPC). Interacts with CCDC79/TERB1; promoting the accumulation of the LINC complex complexes at the telomere-nuclear envelope attachment sites. Interacts (via KASH domain) with TMEM258. In terms of processing, the disulfide bond with KASH domain-containing nesprins is required for stability of the respective LINC complexes under tensile forces.

It is found in the nucleus inner membrane. As a component of the LINC (LInker of Nucleoskeleton and Cytoskeleton) complex involved in the connection between the nuclear lamina and the cytoskeleton. The nucleocytoplasmic interactions established by the LINC complex play an important role in the transmission of mechanical forces across the nuclear envelope and in nuclear movement and positioning. Required for interkinetic nuclear migration (INM) and essential for nucleokinesis and centrosome-nucleus coupling during radial neuronal migration in the cerebral cortex and during glial migration. Involved in telomere attachment to nuclear envelope in the prophase of meiosis implicating a SUN1/2:KASH5 LINC complex in which SUN1 and SUN2 seem to act at least partial redundantly. Required for gametogenesis and involved in selective gene expression of coding and non-coding RNAs needed for gametogenesis. Helps to define the distribution of nuclear pore complexes (NPCs). Required for efficient localization of SYNE4 in the nuclear envelope. May be involved in nuclear remodeling during sperm head formation in spermatogenesis. May play a role in DNA repair by suppressing non-homologous end joining repair to facilitate the repair of DNA cross-links. This chain is SUN domain-containing protein 1, found in Homo sapiens (Human).